Reading from the N-terminus, the 79-residue chain is Putative membrane protein insertion efficiency factor (79 aa).

It belongs to the UPF0161 family.

Its subcellular location is the cell inner membrane. Functionally, could be involved in insertion of integral membrane proteins into the membrane. This chain is Putative membrane protein insertion efficiency factor, found in Prochlorococcus marinus (strain SARG / CCMP1375 / SS120).